We begin with the raw amino-acid sequence, 590 residues long: uncharacterized protein (590 aa).

The Cytoplasmic segment spans residues 1 to 68 (MKFSKPKFSM…SQRVWGPWNY (68 aa)). The chain crosses the membrane as a helical span at residues 69–89 (VAFWLADSVNVNTWMIAGTAV). Topologically, residues 90–94 (ESGLS) are extracellular. A helical membrane pass occupies residues 95 to 115 (WWEAWITVWVGYTIAAFILTI). At 116 to 124 (AGRAGAVYH) the chain is on the cytoplasmic side. A helical membrane pass occupies residues 125–145 (ISFPVLSRSSFGIWGSLWPIL). Residues 146–149 (NRAV) lie on the Extracellular side of the membrane. The chain crosses the membrane as a helical span at residues 150–170 (MACVWYGVQAWIGGECVTLMI). Topologically, residues 171 to 194 (RSIWPSFSHIPNTMAKSGTETYQW) are cytoplasmic. The helical transmembrane segment at 195 to 215 (VGFFIFWLISNVAIWFPVYQI) threads the bilayer. At 216-218 (RHL) the chain is on the extracellular side. A helical membrane pass occupies residues 219–239 (FTAKSFLAPPAAIAFLIWALV). Residues 240–258 (KAHGAGDAIHAKTQLSTWN) are Cytoplasmic-facing. The helical transmembrane segment at 259–279 (HGWAVTAGIISCLDNFATLIV) threads the bilayer. Residues 280 to 298 (NNPDFTRFATTPNAPIFPQ) lie on the Extracellular side of the membrane. The helical transmembrane segment at 299-319 (LITIPMGFGITTLIGVLVGSA) threads the bilayer. Residues 320-390 (SKSIYGENIW…LCPMFINIRR (71 aa)) lie on the Cytoplasmic side of the membrane. The helical transmembrane segment at 391-411 (GGYIASIIGICMCPWNLLSSS) threads the bilayer. Topologically, residues 412-418 (NSFANSL) are extracellular. A helical transmembrane segment spans residues 419–439 (SAYAVFLSSFAGILIADYFVI). Residues 440-467 (RKGYLKVDALYTINPNEPYWFTYGINLR) are Cytoplasmic-facing. Residues 468-488 (AFASYICGLLINVVGLAGAVG) traverse the membrane as a helical segment. Residues 489–500 (DKVPKAALTMNN) are Extracellular-facing. Residues 501 to 521 (IAYLLGIVTSFLSHLIICKIF) traverse the membrane as a helical segment. At 522-590 (PVTACGEKFL…GIDIKESSVF (69 aa)) the chain is on the cytoplasmic side. The interval 566–590 (VSYDSKEKSDDGKSGGIDIKESSVF) is disordered.

It belongs to the purine-cytosine permease (2.A.39) family.

It is found in the cytoplasm. Its subcellular location is the nucleus. The protein resides in the membrane. This is an uncharacterized protein from Schizosaccharomyces pombe (strain 972 / ATCC 24843) (Fission yeast).